Consider the following 194-residue polypeptide: Translationally-controlled tumor protein homolog 2 (194 aa).

Residues 1–194 (MKLYKDLIGN…IKYGLLQVDV (194 aa)) form the TCTP domain.

It belongs to the TCTP family.

It is found in the cytoplasm. Functionally, involved in calcium binding and microtubule stabilization. The sequence is that of Translationally-controlled tumor protein homolog 2 from Dictyostelium discoideum (Social amoeba).